We begin with the raw amino-acid sequence, 528 residues long: G patch domain-containing protein 2 (528 aa).

The segment at 36-119 (LEESSEQARG…NKKDHSDSDD (84 aa)) is disordered. Residues 63–77 (RQARKRRGRKRRSYN) are compositionally biased toward basic residues. Over residues 98–117 (EPSKDYRENHNNNKKDHSDS) the composition is skewed to basic and acidic residues. 4 positions are modified to phosphoserine: Ser115, Ser117, Ser146, and Ser195. Disordered regions lie at residues 232–282 (SEET…GDDE) and 487–528 (GRDG…GKSA). Residues 239–252 (NKDKMECEEQKVSD) show a composition bias toward basic and acidic residues. Residues 467–513 (ENNIGNRMLQNMGWTPGSGLGRDGKGISEPIQAMQRPKGLGLGFPLP) enclose the G-patch domain. Over residues 514–528 (KSTSATTTPNAGKSA) the composition is skewed to polar residues.

Interacts with DHX15. As to expression, testis.

Its subcellular location is the nucleus speckle. It localises to the nucleus. The protein resides in the nucleolus. In terms of biological role, enhances the ATPase activity of DHX15 in vitro. The chain is G patch domain-containing protein 2 (GPATCH2) from Homo sapiens (Human).